The chain runs to 232 residues: Ubiquinone biosynthesis O-methyltransferase (232 aa).

S-adenosyl-L-methionine is bound by residues Arg36, Gly55, Asp76, and Leu120.

It belongs to the methyltransferase superfamily. UbiG/COQ3 family.

The enzyme catalyses a 3-demethylubiquinol + S-adenosyl-L-methionine = a ubiquinol + S-adenosyl-L-homocysteine + H(+). The catalysed reaction is a 3-(all-trans-polyprenyl)benzene-1,2-diol + S-adenosyl-L-methionine = a 2-methoxy-6-(all-trans-polyprenyl)phenol + S-adenosyl-L-homocysteine + H(+). Its pathway is cofactor biosynthesis; ubiquinone biosynthesis. Functionally, O-methyltransferase that catalyzes the 2 O-methylation steps in the ubiquinone biosynthetic pathway. In Pseudomonas aeruginosa (strain ATCC 15692 / DSM 22644 / CIP 104116 / JCM 14847 / LMG 12228 / 1C / PRS 101 / PAO1), this protein is Ubiquinone biosynthesis O-methyltransferase.